Consider the following 248-residue polypeptide: 3-oxoacyl-[acyl-carrier-protein] reductase FabG (248 aa).

NADP(+) contacts are provided by residues 14–17 (GSTR), T39, 65–66 (NL), and N92. S144 is a substrate binding site. The active-site Proton acceptor is the Y157. Residues 157 to 161 (YSTTK) and I190 contribute to the NADP(+) site.

Belongs to the short-chain dehydrogenases/reductases (SDR) family. As to quaternary structure, homotetramer.

It catalyses the reaction a (3R)-hydroxyacyl-[ACP] + NADP(+) = a 3-oxoacyl-[ACP] + NADPH + H(+). Its pathway is lipid metabolism; fatty acid biosynthesis. Its function is as follows. Catalyzes the NADPH-dependent reduction of beta-ketoacyl-ACP substrates to beta-hydroxyacyl-ACP products, the first reductive step in the elongation cycle of fatty acid biosynthesis. This is 3-oxoacyl-[acyl-carrier-protein] reductase FabG (fabG) from Aquifex aeolicus (strain VF5).